A 234-amino-acid chain; its full sequence is DNA repair protein RecO (234 aa).

The protein belongs to the RecO family.

Involved in DNA repair and RecF pathway recombination. The sequence is that of DNA repair protein RecO from Hamiltonella defensa subsp. Acyrthosiphon pisum (strain 5AT).